The chain runs to 260 residues: MIIVLSPAKSLDYETPAHVQSYTQPAFVDDASELIAGLRKLSPQDIATLMDISDPLARLNYQRYADWSPIFTPANSKQAVLAFNGDVYEGFDAKSLSAADLDYAQQHVRVLSGLYGLLRPLDLLQPYRLEMGTRFANTRGKDLYAFWGDRITRALNEQLETRRGASRVLINCASTEYFKSVKPKLLAAPVITPVFEDWKGGRYKIISFHAKRARGLMARYVVENRIAEPKALQAFAMEGYAFDAAASNDSTYVYRRRVGE.

It belongs to the UPF0246 family.

The polypeptide is UPF0246 protein Bmul_1054/BMULJ_02209 (Burkholderia multivorans (strain ATCC 17616 / 249)).